The sequence spans 142 residues: Nucleoside diphosphate kinase (142 aa).

6 residues coordinate ATP: K11, F59, R87, T93, R104, and N114. H117 (pros-phosphohistidine intermediate) is an active-site residue.

This sequence belongs to the NDK family. In terms of assembly, homotetramer. Requires Mg(2+) as cofactor.

The protein localises to the cytoplasm. It carries out the reaction a 2'-deoxyribonucleoside 5'-diphosphate + ATP = a 2'-deoxyribonucleoside 5'-triphosphate + ADP. The catalysed reaction is a ribonucleoside 5'-diphosphate + ATP = a ribonucleoside 5'-triphosphate + ADP. Major role in the synthesis of nucleoside triphosphates other than ATP. The ATP gamma phosphate is transferred to the NDP beta phosphate via a ping-pong mechanism, using a phosphorylated active-site intermediate. The protein is Nucleoside diphosphate kinase of Aeromonas salmonicida (strain A449).